We begin with the raw amino-acid sequence, 370 residues long: 3-isopropylmalate dehydrogenase (370 aa).

77 to 90 serves as a coordination point for NAD(+); it reads GAKWDGVPYEARPE. 4 residues coordinate substrate: R97, R107, R135, and D226. Mg(2+)-binding residues include D226, D250, and D254. 290-302 is an NAD(+) binding site; the sequence is GSAPDIAGKGLAN.

The protein belongs to the isocitrate and isopropylmalate dehydrogenases family. LeuB type 1 subfamily. Homodimer. The cofactor is Mg(2+). Requires Mn(2+) as cofactor.

The protein resides in the cytoplasm. It catalyses the reaction (2R,3S)-3-isopropylmalate + NAD(+) = 4-methyl-2-oxopentanoate + CO2 + NADH. Its pathway is amino-acid biosynthesis; L-leucine biosynthesis; L-leucine from 3-methyl-2-oxobutanoate: step 3/4. In terms of biological role, catalyzes the oxidation of 3-carboxy-2-hydroxy-4-methylpentanoate (3-isopropylmalate) to 3-carboxy-4-methyl-2-oxopentanoate. The product decarboxylates to 4-methyl-2 oxopentanoate. The chain is 3-isopropylmalate dehydrogenase from Rhodopseudomonas palustris (strain BisB18).